We begin with the raw amino-acid sequence, 682 residues long: Zinc finger protein 16 (682 aa).

2 stretches are compositionally biased toward basic and acidic residues: residues 1-10 (MPSLRTRREE) and 113-125 (VSER…EGRR). Disordered regions lie at residues 1–33 (MPSL…HVSD) and 112–134 (DVSE…SQEG). A necessary for transcription activation region spans residues 62 to 210 (YQQPDCDTRT…GVPTAESPLI (149 aa)). The C2H2-type 1; degenerate zinc finger occupies 209–231 (LICNECGKTFQGNPDLIQCQIVH). A C2H2-type 2; degenerate zinc finger spans residues 237–259 (FMCDDCGKTFSQNSVLKNHHRSH). Lys253 participates in a covalent cross-link: Glycyl lysine isopeptide (Lys-Gly) (interchain with G-Cter in SUMO2). 8 C2H2-type zinc fingers span residues 265–287 (YQCS…QSHH), 293–315 (YMCN…QKSH), 321–343 (YECN…QRIH), 349–371 (YVCS…HRTH), 377–399 (FECG…QRVH), 405–427 (YECN…HRVH), 433–455 (YKCS…RRIH), and 461–483 (HVCN…QIIH). 2 required for nuclear localization regions span residues 268–393 (SECG…AHLR) and 341–373 (RIHS…THTG). Residues 473-503 (SSVLRKHQIIHTGEKPYRCSVCGKAFSHSSA) form a required for nuclear localization region. Lys487 is modified (N6-acetyllysine). C2H2-type zinc fingers lie at residues 489 to 511 (YRCS…QGVH), 517 to 539 (YACH…QRVH), 545 to 567 (YECT…QRIH), 573 to 595 (HECN…QKVH), 601 to 623 (YTCV…QIIH), 629 to 651 (YKCS…QRIH), and 657 to 679 (YDCA…QLIH).

This sequence belongs to the krueppel C2H2-type zinc-finger protein family. As to quaternary structure, interacts with INCA1; the interaction inhibits INCA1 activity and induces the cell cycle process.

It is found in the nucleus. Its function is as follows. Acts as a transcriptional activator. Promotes cell proliferation by facilitating the cell cycle phase transition from the S to G2/M phase. Involved in both the hemin- and phorbol myristate acetate (PMA)-induced erythroid and megakaryocytic differentiation, respectively. Also plays a role as an inhibitor of cell apoptosis. The chain is Zinc finger protein 16 (ZNF16) from Gorilla gorilla gorilla (Western lowland gorilla).